A 208-amino-acid chain; its full sequence is Uracil phosphoribosyltransferase (208 aa).

Residues arginine 78, arginine 103, and aspartate 130–threonine 138 each bind 5-phospho-alpha-D-ribose 1-diphosphate. Uracil is bound by residues isoleucine 193 and glycine 198–alanine 200. Residue aspartate 199 participates in 5-phospho-alpha-D-ribose 1-diphosphate binding.

The protein belongs to the UPRTase family. Requires Mg(2+) as cofactor.

The enzyme catalyses UMP + diphosphate = 5-phospho-alpha-D-ribose 1-diphosphate + uracil. Its pathway is pyrimidine metabolism; UMP biosynthesis via salvage pathway; UMP from uracil: step 1/1. Its activity is regulated as follows. Allosterically activated by GTP. Functionally, catalyzes the conversion of uracil and 5-phospho-alpha-D-ribose 1-diphosphate (PRPP) to UMP and diphosphate. The polypeptide is Uracil phosphoribosyltransferase (Maridesulfovibrio salexigens (strain ATCC 14822 / DSM 2638 / NCIMB 8403 / VKM B-1763) (Desulfovibrio salexigens)).